A 492-amino-acid chain; its full sequence is MADSEDTFRLQNSPSDSEPKDLQNEGKSDKQNAAVSKSPSSQTTYIQQGMEGIKVYLHERELWTKFHEVGTEMIITKAGRRMFPSFKVKVTGLNPKTKYILLMDVVPADDHRYKFADNKWSVTGKAEPAMPGRLYVHPDSPATGAHWMRQLVSFQKLKLTNNHLDPFGHIILNSMHKYQPRIHIVKADENNGFGSKNTAFCTHVFPETAFIAVTSYQNHKITQLKIENNPFAKGFRGSDDMELHRMSRMQSTKEYPVVPRSTVRQRVGSSQSPFSGDVQGLSASGAISSQYSCENGVSSTSQDLLPQSSSYHEHTQDYHCIKRKVEDECPAGEHPYKKPYVESSSSEDDHYYRPLSYSQSLGLSGGAPYRPESSQRQACMYASAPQPPEPVPSLEDISWPGVPPYSVPQMERLPYQHHFSAHFASRQMPEAHGMYASSVSHQCSPSGGIQSPSAGLQGNEYLYAHGLQRTLSPHQYHTVHSVSIMHDWNEAS.

A disordered region spans residues 1–43; the sequence is MADSEDTFRLQNSPSDSEPKDLQNEGKSDKQNAAVSKSPSSQT. A compositionally biased stretch (basic and acidic residues) spans 17–30; the sequence is SEPKDLQNEGKSDK. Residues 31 to 43 are compositionally biased toward polar residues; that stretch reads QNAAVSKSPSSQT. The segment at residues 62–237 is a DNA-binding region (T-box); sequence LWTKFHEVGT…NNPFAKGFRG (176 aa). Residues 331–352 form a disordered region; sequence AGEHPYKKPYVESSSSEDDHYY.

In terms of assembly, monomer. Homodimer (via the T-box); binds DNA as homodimer. Expressed in the dorsal optic cup of developing eye, pectoral fin buds and heart. At 31 hpf, when the pectoral fin buds have begun bulging outwards, restricted expression is detected throughout the mesenchyme of the early fin buds and these high levels of expression continue until later stages.

It is found in the nucleus. The protein localises to the cytoplasm. In terms of biological role, required for pectoral fin formation. Together with tbx5b, involved in eye and heart development. Required for the looping stage of heart development. May bind to the core DNA motif of promoters. The protein is T-box transcription factor TBX5-A (tbx5a) of Danio rerio (Zebrafish).